A 768-amino-acid chain; its full sequence is Translation factor GUF1 homolog, mitochondrial (768 aa).

The N-terminal 29 residues, 1-29 (MRLWNRFSRLGNLLCACAACGCSFTPWRC), are a transit peptide targeting the mitochondrion. The 184-residue stretch at 110-293 (SNIRNVAVVA…AIIERVPSPS (184 aa)) folds into the tr-type G domain. GTP-binding positions include 119-126 (AHVDHGKT), 184-188 (DTPGH), and 238-241 (TKMD).

Belongs to the TRAFAC class translation factor GTPase superfamily. Classic translation factor GTPase family. LepA subfamily.

It localises to the mitochondrion inner membrane. It carries out the reaction GTP + H2O = GDP + phosphate + H(+). Functionally, promotes mitochondrial protein synthesis. May act as a fidelity factor of the translation reaction, by catalyzing a one-codon backward translocation of tRNAs on improperly translocated ribosomes. Binds to mitochondrial ribosomes in a GTP-dependent manner. The sequence is that of Translation factor GUF1 homolog, mitochondrial from Trypanosoma brucei brucei (strain 927/4 GUTat10.1).